The following is a 97-amino-acid chain: Small ribosomal subunit protein bS6 (97 aa).

This sequence belongs to the bacterial ribosomal protein bS6 family.

Its function is as follows. Binds together with bS18 to 16S ribosomal RNA. The sequence is that of Small ribosomal subunit protein bS6 from Listeria innocua serovar 6a (strain ATCC BAA-680 / CLIP 11262).